The following is a 91-amino-acid chain: Pre-early 3 receptor internalization and degradation alpha protein (91 aa).

The Cytoplasmic portion of the chain corresponds to 1-4 (MIPR). Residues 1–22 (MIPRVLILLTLVALFCACSTLA) constitute a propeptide, signal peptide. A helical transmembrane segment spans residues 5-25 (VLILLTLVALFCACSTLAAVA). Topologically, residues 26 to 34 (HIEVDCIPP) are lumenal. The helical transmembrane segment at 35 to 60 (FTVYLLYGFVTLILICSLVTVVIAFI) threads the bilayer. Residues 61-91 (QFIDWVCVRIAYLRHHPQYRDRTIADLLRIL) lie on the Cytoplasmic side of the membrane.

It belongs to the adenoviridae E3-RID-alpha family. In terms of assembly, homodimer with only one chain cleaved by signal peptidase. Interacts with E3 RID-beta and E3 CR1-alpha. Post-translationally, the signal peptide is only cleaved partially by host signal peptidase. This results in two forms of the protein, one uncleaved with two transmembrane regions, and one cleaved with one transmembrane region.

The protein localises to the host membrane. It localises to the host endoplasmic reticulum. Functionally, prevents infected cell apoptosis induced by the host immune system. Acts by down-regulating a number of cell surface receptors in the tumor necrosis factor (TNF) receptor superfamily, namely FAS, TNFRSF10A/TRAIL receptor 1, and TNFRSF10B/TRAIL receptor 2. Down-regulation of these death receptors protects adenovirus-infected cells from apoptosis induced by the death receptor ligands Fas ligand and TRAIL. RID complex also down-regulates certain tyrosine kinase cell surface receptors, especially the epidermal growth factor receptor (EGFR). RID-mediated Fas and EGFR down-regulation occurs via endocytosis of the receptors into endosomes followed by transport to and degradation within lysosomes. The chain is Pre-early 3 receptor internalization and degradation alpha protein from Homo sapiens (Human).